Consider the following 778-residue polypeptide: pH-response regulator protein palH/prr-4 (778 aa).

Over 1 to 108 the chain is Extracellular; sequence MEPRQLFSDP…DPFYASTFPQ (108 aa). The chain crosses the membrane as a helical span at residues 109–129; that stretch reads CYALAATTIIAYTLVIMLFIT. The Periplasmic portion of the chain corresponds to 130–160; the sequence is PRSFLDGGVVVLGRKGFTNGGGGTSIGGRPW. The helical transmembrane segment at 161 to 181 threads the bilayer; the sequence is LQKVAALSVAISLTIANAATF. Over 182–201 the chain is Extracellular; the sequence is RAAEQQYSWGVQNAKQLQED. A helical membrane pass occupies residues 202–222; that stretch reads VLGGAELKIIRIISDTFLWLA. Residues 223–237 lie on the Periplasmic side of the membrane; it reads QAQTLIRLFPRQREK. Residues 238-258 form a helical membrane-spanning segment; that stretch reads VIIKWTAFALITLDVIFQSLN. The Extracellular segment spans residues 259-275; the sequence is SFKYGGSDLTRPKFTEA. Residues 276-296 traverse the membrane as a helical segment; that stretch reads VPALSYLFALALGVLYAAWVL. The Periplasmic segment spans residues 297–314; it reads YYSIMKKRYAFYHPLMKN. The helical transmembrane segment at 315–335 threads the bilayer; it reads MILVAVLSVVSILVPVVFFIL. Residues 336 to 341 are Extracellular-facing; it reads DISKPD. Residues 342-362 traverse the membrane as a helical segment; it reads FAGWGDYVRWVGAAAASVIVW. Residues 363–778 are Periplasmic-facing; sequence EWVERIEALE…RSDSSTTPSP (416 aa). 3 disordered regions span residues 394–499, 514–605, and 660–778; these read ASQS…DTTS, ELTS…DENS, and ELNH…TPSP. The segment covering 446–456 has biased composition (basic and acidic residues); it reads HRTEPSSRNEP. The span at 457–466 shows a compositional bias: polar residues; that stretch reads NEGSSPVAET. Basic and acidic residues-rich tracts occupy residues 588–605 and 661–675; these read FVTRSEPRSSKMQRDENS and LNHSSREGTVREESR. Over residues 720–732 the composition is skewed to polar residues; it reads PIVTQGSFTNNRY. The span at 749–759 shows a compositional bias: low complexity; sequence ARAPSQPQSPS. Positions 769–778 are enriched in polar residues; that stretch reads RSDSSTTPSP.

This sequence belongs to the palH/RIM21 family.

It localises to the cell membrane. Required for the proteolytic cleavage of the transcription factor pacc-1 in response to alkaline ambient pH. This is pH-response regulator protein palH/prr-4 (prr-4) from Neurospora crassa (strain ATCC 24698 / 74-OR23-1A / CBS 708.71 / DSM 1257 / FGSC 987).